Reading from the N-terminus, the 356-residue chain is Photosystem II protein D1 4 (356 aa).

3 helical membrane passes run 32–49, 121–136, and 145–159; these read YIGW…AATT, HFLI…FWEL, and WIAV…AATS. Histidine 121 serves as a coordination point for chlorophyll a. [CaMn4O5] cluster contacts are provided by aspartate 173 and aspartate 192. The helical transmembrane segment at 200–221 threads the bilayer; sequence FHMLGVAGVFGGALLSSLHGSL. A chlorophyll a-binding site is contributed by histidine 201. Residue histidine 218 coordinates a quinone. Fe cation contacts are provided by histidine 218 and histidine 276. The helical transmembrane segment at 278–292 threads the bilayer; sequence LLAALPTIGIWFAAM. A [CaMn4O5] cluster-binding site is contributed by histidine 336.

It belongs to the reaction center PufL/M/PsbA/D family. As to quaternary structure, PSII is composed of 1 copy each of membrane proteins PsbA, PsbB, PsbC, PsbD, PsbE, PsbF, PsbH, PsbI, PsbJ, PsbK, PsbL, PsbM, PsbT, PsbX, PsbY, PsbZ, Psb30/Ycf12, peripheral proteins PsbO, CyanoQ (PsbQ), PsbU, PsbV and a large number of cofactors. It forms dimeric complexes. The D1/D2 heterodimer binds P680, chlorophylls that are the primary electron donor of PSII, and subsequent electron acceptors. It shares a non-heme iron and each subunit binds pheophytin, quinone, additional chlorophylls, carotenoids and lipids. D1 provides most of the ligands for the Mn4-Ca-O5 cluster of the oxygen-evolving complex (OEC). There is also a Cl(-1) ion associated with D1 and D2, which is required for oxygen evolution. The PSII complex binds additional chlorophylls, carotenoids and specific lipids. is required as a cofactor. Tyr-164 forms a radical intermediate that is referred to as redox-active TyrZ, YZ or Y-Z.

It is found in the cellular thylakoid membrane. It catalyses the reaction 2 a plastoquinone + 4 hnu + 2 H2O = 2 a plastoquinol + O2. Its function is as follows. Photosystem II (PSII) is a light-driven water:plastoquinone oxidoreductase that uses light energy to abstract electrons from H(2)O, generating O(2) and a proton gradient subsequently used for ATP formation. It consists of a core antenna complex that captures photons, and an electron transfer chain that converts photonic excitation into a charge separation. The D1/D2 (PsbA/PsbD) reaction center heterodimer binds P680, the primary electron donor of PSII as well as several subsequent electron acceptors. This Trichormus variabilis (strain ATCC 29413 / PCC 7937) (Anabaena variabilis) protein is Photosystem II protein D1 4.